A 167-amino-acid chain; its full sequence is Lipoprotein signal peptidase (167 aa).

Helical transmembrane passes span 5–25 (ICST…LDLG), 42–62 (LIPY…SFLA), 70–90 (WFFA…MYRA), and 102–122 (ALII…GFVI). Residues aspartate 123 and aspartate 141 contribute to the active site. Residues 137–157 (FNIADMAICIGAGLVIIDSFL) form a helical membrane-spanning segment.

Belongs to the peptidase A8 family.

The protein localises to the cell inner membrane. The catalysed reaction is Release of signal peptides from bacterial membrane prolipoproteins. Hydrolyzes -Xaa-Yaa-Zaa-|-(S,diacylglyceryl)Cys-, in which Xaa is hydrophobic (preferably Leu), and Yaa (Ala or Ser) and Zaa (Gly or Ala) have small, neutral side chains.. It participates in protein modification; lipoprotein biosynthesis (signal peptide cleavage). This protein specifically catalyzes the removal of signal peptides from prolipoproteins. This chain is Lipoprotein signal peptidase, found in Photorhabdus laumondii subsp. laumondii (strain DSM 15139 / CIP 105565 / TT01) (Photorhabdus luminescens subsp. laumondii).